The following is a 354-amino-acid chain: Photosystem II D2 protein (354 aa).

Threonine 2 is modified (N-acetylthreonine). The residue at position 2 (threonine 2) is a Phosphothreonine. A helical transmembrane segment spans residues cysteine 42–threonine 62. Histidine 119 is a chlorophyll a binding site. The helical transmembrane segment at glycine 126–proline 142 threads the bilayer. Pheophytin a-binding residues include glutamine 131 and asparagine 144. A helical transmembrane segment spans residues valine 154 to glutamine 167. Residue histidine 199 participates in chlorophyll a binding. The helical transmembrane segment at alanine 209–aspartate 229 threads the bilayer. Residues histidine 216 and phenylalanine 263 each coordinate a plastoquinone. A Fe cation-binding site is contributed by histidine 216. Histidine 270 is a binding site for Fe cation. The helical transmembrane segment at glycine 280 to arginine 296 threads the bilayer.

Belongs to the reaction center PufL/M/PsbA/D family. As to quaternary structure, PSII is composed of 1 copy each of membrane proteins PsbA, PsbB, PsbC, PsbD, PsbE, PsbF, PsbH, PsbI, PsbJ, PsbK, PsbL, PsbM, PsbT, PsbX, PsbY, PsbZ, Psb30/Ycf12, at least 3 peripheral proteins of the oxygen-evolving complex and a large number of cofactors. It forms dimeric complexes. The cofactor is The D1/D2 heterodimer binds P680, chlorophylls that are the primary electron donor of PSII, and subsequent electron acceptors. It shares a non-heme iron and each subunit binds pheophytin, quinone, additional chlorophylls, carotenoids and lipids. There is also a Cl(-1) ion associated with D1 and D2, which is required for oxygen evolution. The PSII complex binds additional chlorophylls, carotenoids and specific lipids..

The protein localises to the plastid. Its subcellular location is the chloroplast thylakoid membrane. The enzyme catalyses 2 a plastoquinone + 4 hnu + 2 H2O = 2 a plastoquinol + O2. In terms of biological role, photosystem II (PSII) is a light-driven water:plastoquinone oxidoreductase that uses light energy to abstract electrons from H(2)O, generating O(2) and a proton gradient subsequently used for ATP formation. It consists of a core antenna complex that captures photons, and an electron transfer chain that converts photonic excitation into a charge separation. The D1/D2 (PsbA/PsbD) reaction center heterodimer binds P680, the primary electron donor of PSII as well as several subsequent electron acceptors. D2 is needed for assembly of a stable PSII complex. This Mesostigma viride (Green alga) protein is Photosystem II D2 protein.